The sequence spans 99 residues: High mobility group nucleosome-binding domain-containing protein 3 (99 aa).

Composition is skewed to basic and acidic residues over residues 1 to 25, 39 to 53, and 62 to 72; these read MPKRKSPENTEDKDGSKVTKQEPTR, PEPKPRKTSAKKEPG, and GKKEEKQEAGK. Positions 1 to 99 are disordered; that stretch reads MPKRKSPENT…KTESVDNEGE (99 aa). Ser-6 is subject to Phosphoserine. Phosphothreonine is present on Thr-10. A phosphoserine mark is found at Ser-78 and Ser-93. The segment covering 81 to 93 has biased composition (basic and acidic residues); sequence GETKAEEAQKTES.

It belongs to the HMGN family. As to quaternary structure, interacts with the ligand binding domain of the thyroid receptor (TR) (in vitro). Requires the presence of thyroid hormone for its interaction. Interacts with transcriptional regulator SEHBP. Interacts with nucleosomes.

The protein localises to the nucleus. Functionally, binds to nucleosomes, regulating chromatin structure and consequently, chromatin-dependent processes such as transcription, DNA replication and DNA repair. Affects both insulin and glucagon levels and modulates the expression of pancreatic genes involved in insulin secretion. Regulates the expression of the glucose transporter SLC2A2 by binding specifically to its promoter region and recruiting PDX1 and additional transcription factors. Regulates the expression of SLC6A9, a glycine transporter which regulates the glycine concentration in synaptic junctions in the central nervous system, by binding to its transcription start site. May play a role in ocular development and astrocyte function. This is High mobility group nucleosome-binding domain-containing protein 3 (HMGN3) from Pongo abelii (Sumatran orangutan).